The primary structure comprises 424 residues: Serine--tRNA ligase (424 aa).

232–234 (TAE) contacts L-serine. Position 263-265 (263-265 (RRE)) interacts with ATP. Glu286 contributes to the L-serine binding site. 350–353 (EISS) is an ATP binding site. Ser384 lines the L-serine pocket.

This sequence belongs to the class-II aminoacyl-tRNA synthetase family. Type-1 seryl-tRNA synthetase subfamily. Homodimer. The tRNA molecule binds across the dimer.

The protein resides in the cytoplasm. It catalyses the reaction tRNA(Ser) + L-serine + ATP = L-seryl-tRNA(Ser) + AMP + diphosphate + H(+). The enzyme catalyses tRNA(Sec) + L-serine + ATP = L-seryl-tRNA(Sec) + AMP + diphosphate + H(+). The protein operates within aminoacyl-tRNA biosynthesis; selenocysteinyl-tRNA(Sec) biosynthesis; L-seryl-tRNA(Sec) from L-serine and tRNA(Sec): step 1/1. Its function is as follows. Catalyzes the attachment of serine to tRNA(Ser). Is also able to aminoacylate tRNA(Sec) with serine, to form the misacylated tRNA L-seryl-tRNA(Sec), which will be further converted into selenocysteinyl-tRNA(Sec). This Prochlorococcus marinus subsp. pastoris (strain CCMP1986 / NIES-2087 / MED4) protein is Serine--tRNA ligase.